The sequence spans 506 residues: Ribose import ATP-binding protein RbsA (506 aa).

2 ABC transporter domains span residues 5 to 241 (LALT…VGRR) and 254 to 498 (RDAA…TSDV). 37–44 (GENGAGKS) is an ATP binding site.

The protein belongs to the ABC transporter superfamily. Ribose importer (TC 3.A.1.2.1) family. In terms of assembly, the complex is composed of an ATP-binding protein (RbsA), two transmembrane proteins (RbsC) and a solute-binding protein (RbsB).

The protein localises to the cell inner membrane. It catalyses the reaction D-ribose(out) + ATP + H2O = D-ribose(in) + ADP + phosphate + H(+). In terms of biological role, part of the ABC transporter complex RbsABC involved in ribose import. Responsible for energy coupling to the transport system. This Burkholderia mallei (strain ATCC 23344) protein is Ribose import ATP-binding protein RbsA.